Here is a 378-residue protein sequence, read N- to C-terminus: Chaperone protein DnaJ (378 aa).

One can recognise a J domain in the interval 5–69 (EYYDRLGVSK…QKRAAYDQYG (65 aa)). The segment at 134 to 216 (GVEKEVSYNR…CHGTGHEKQA (83 aa)) adopts a CR-type zinc-finger fold. Zn(2+)-binding residues include cysteine 147, cysteine 150, cysteine 164, cysteine 167, cysteine 190, cysteine 193, cysteine 204, and cysteine 207. CXXCXGXG motif repeat units follow at residues 147–154 (CGTCLGSG), 164–171 (CRKCHGSG), 190–197 (CDICHGSG), and 204–211 (CQTCHGTG).

This sequence belongs to the DnaJ family. As to quaternary structure, homodimer. Zn(2+) serves as cofactor.

It is found in the cytoplasm. Its function is as follows. Participates actively in the response to hyperosmotic and heat shock by preventing the aggregation of stress-denatured proteins and by disaggregating proteins, also in an autonomous, DnaK-independent fashion. Unfolded proteins bind initially to DnaJ; upon interaction with the DnaJ-bound protein, DnaK hydrolyzes its bound ATP, resulting in the formation of a stable complex. GrpE releases ADP from DnaK; ATP binding to DnaK triggers the release of the substrate protein, thus completing the reaction cycle. Several rounds of ATP-dependent interactions between DnaJ, DnaK and GrpE are required for fully efficient folding. Also involved, together with DnaK and GrpE, in the DNA replication of plasmids through activation of initiation proteins. In Streptococcus pyogenes serotype M1, this protein is Chaperone protein DnaJ.